The sequence spans 99 residues: NADH-quinone oxidoreductase subunit K (99 aa).

The next 3 membrane-spanning stretches (helical) occupy residues 3-23 (PENY…GVLI), 28-48 (IIVF…FVTF), and 59-79 (VFAF…LAII).

The protein belongs to the complex I subunit 4L family. NDH-1 is composed of 14 different subunits. Subunits NuoA, H, J, K, L, M, N constitute the membrane sector of the complex.

The protein resides in the cell membrane. The catalysed reaction is a quinone + NADH + 5 H(+)(in) = a quinol + NAD(+) + 4 H(+)(out). In terms of biological role, NDH-1 shuttles electrons from NADH, via FMN and iron-sulfur (Fe-S) centers, to quinones in the respiratory chain. The immediate electron acceptor for the enzyme in this species is believed to be a menaquinone. Couples the redox reaction to proton translocation (for every two electrons transferred, four hydrogen ions are translocated across the cytoplasmic membrane), and thus conserves the redox energy in a proton gradient. This chain is NADH-quinone oxidoreductase subunit K, found in Rhodococcus jostii (strain RHA1).